Reading from the N-terminus, the 715-residue chain is Probable ubiquitin thioesterase DG1039 (715 aa).

Residues 86-302 (KSRNEIKRKA…NNQTDDKLDN (217 aa)) adopt a coiled-coil conformation. Basic and acidic residues predominate over residues 287–302 (NKKLENNNQTDDKLDN). Disordered stretches follow at residues 287-367 (NKKL…YNST), 398-450 (QYKQ…QQQY), and 502-527 (LAQS…SSEA). Positions 339 to 349 (TTAQLPLSITQ) are enriched in polar residues. Low complexity predominate over residues 398–409 (QYKQQQQQQPIQ). Polar residues-rich tracts occupy residues 410-427 (SPTN…NNYN) and 502-525 (LAQS…IDSS). The MPN domain occupies 537–666 (IIVHGEVFQE…IFRLTDPPGL (130 aa)). The Zn(2+) site is built by H615, H617, D628, H630, C672, H678, and H680. Residues 615-628 (HTHPTQDCFLSAVD) carry the JAMM motif motif.

The protein belongs to the peptidase M67C family. Zn(2+) is required as a cofactor.

Functionally, may be a zinc metalloprotease that specifically cleaves ubiquitin chains. In Dictyostelium discoideum (Social amoeba), this protein is Probable ubiquitin thioesterase DG1039 (DG1039).